A 963-amino-acid polypeptide reads, in one-letter code: Collagen alpha-1(I) chain (963 aa).

Residues 1-963 are disordered; sequence GPMGPSGPRG…PGPPGPPGPP (963 aa). The segment covering 40–54 has biased composition (basic and acidic residues); the sequence is NGDDGEAGKPGRPGE. S82 carries the post-translational modification Phosphoserine. 2 stretches are compositionally biased toward low complexity: residues 90–106 and 129–142; these read DAGP…PGEN and PAGA…TGAA. Positions 144–156 are enriched in pro residues; the sequence is PPGPTGPAGPPGF. Positions 190–229 are enriched in low complexity; it reads AGAAGPAGNPGADGQPGAKGANGAPGIAGAPGFPGARGPS. The span at 296 to 305 shows a compositional bias: gly residues; that stretch reads GERGGPGARG. 6 stretches are compositionally biased toward low complexity: residues 313–337, 349–375, 384–403, 482–495, 555–569, and 582–609; these read AGPK…PGEA, KGIT…QDGR, ARGQ…AGEP, PRGA…DGAK, SGPS…ARGA, and AGFA…KGDA. A Phosphoserine modification is found at S558. A compositionally biased stretch (pro residues) spans 611 to 623; it reads PPGPAGPTGPPGP. Low complexity-rich tracts occupy residues 638-654, 683-692, and 702-726; these read SAGP…AGRV, ETGPAGRPGE, and AGEK…QGIA. Pro residues-rich tracts occupy residues 767–777 and 813–828; these read PPGPVGPPGIA and AGPP…PGPV. A compositionally biased stretch (low complexity) spans 849 to 863; the sequence is IGPVGARGPAGPQGP. The segment covering 864–878 has biased composition (basic and acidic residues); sequence RGDKGETGEQGDRGI. Residues 897 to 930 are compositionally biased toward low complexity; sequence PGEQGPSGASGPAGPRGPPGSAGAPGKDGINGIP. Pro residues predominate over residues 948 to 963; that stretch reads VGPPGPPGPPGPPGPP.

This sequence belongs to the fibrillar collagen family. In terms of assembly, trimers of one alpha 2(I) and two alpha 1(I) chains. Post-translationally, prolines at the third position of the tripeptide repeating unit (G-X-Y) are hydroxylated in some or all of the chains. Forms the fibrils of tendon, ligaments and bones. In bones, the fibrils are mineralized with calcium hydroxyapatite.

The protein localises to the secreted. It is found in the extracellular space. The protein resides in the extracellular matrix. Functionally, type I collagen is a member of group I collagen (fibrillar forming collagen). This Tapirus terrestris (Lowland tapir) protein is Collagen alpha-1(I) chain.